A 681-amino-acid chain; its full sequence is Phosphomethylpyrimidine synthase (681 aa).

The segment covering Met1–Ser13 has biased composition (polar residues). A disordered region spans residues Met1–Glu29. The segment covering His15–Lys25 has biased composition (basic residues). Substrate is bound by residues Asn254, Met283, Tyr312, His348, Ser368–Gly370, Asp409–Arg412, and Glu448. His452 contributes to the Zn(2+) binding site. A substrate-binding site is contributed by Tyr475. His516 contacts Zn(2+). Residues Cys596, Cys599, and Cys604 each contribute to the [4Fe-4S] cluster site. Residues Phe658–His667 are compositionally biased toward basic and acidic residues. The disordered stretch occupies residues Phe658 to Thr681.

Belongs to the ThiC family. In terms of assembly, homodimer. The cofactor is [4Fe-4S] cluster.

The enzyme catalyses 5-amino-1-(5-phospho-beta-D-ribosyl)imidazole + S-adenosyl-L-methionine = 4-amino-2-methyl-5-(phosphooxymethyl)pyrimidine + CO + 5'-deoxyadenosine + formate + L-methionine + 3 H(+). It participates in cofactor biosynthesis; thiamine diphosphate biosynthesis. Functionally, catalyzes the synthesis of the hydroxymethylpyrimidine phosphate (HMP-P) moiety of thiamine from aminoimidazole ribotide (AIR) in a radical S-adenosyl-L-methionine (SAM)-dependent reaction. This is Phosphomethylpyrimidine synthase from Yersinia pseudotuberculosis serotype I (strain IP32953).